Here is a 470-residue protein sequence, read N- to C-terminus: 5-hydroxytryptamine receptor 2A (470 aa).

The segment at 1-23 is disordered; the sequence is MDVLFEDNAPLSPTTSSLMPSNG. Residues 1–80 are Extracellular-facing; the sequence is MDVLFEDNAP…LQEKNWSALL (80 aa). Low complexity predominate over residues 10–21; that stretch reads PLSPTTSSLMPS. N38, N44, N51, and N54 each carry an N-linked (GlcNAc...) asparagine glycan. Residues 81–97 traverse the membrane as a helical segment; the sequence is TAVVIILTIAGNILVIM. The Cytoplasmic portion of the chain corresponds to 98-111; that stretch reads AVSLEKKLQNATNY. Residues 112-137 traverse the membrane as a helical segment; it reads FLMSLAIADMLLGFLVMPVSMLTILY. Topologically, residues 138–146 are extracellular; it reads GYRWPLPSK. A helical membrane pass occupies residues 147-171; that stretch reads LCAVWIYLDVLFSTASIMHLCAISL. The cysteines at positions 148 and 227 are disulfide-linked. D155 serves as a coordination point for serotonin. Positions 172–174 match the DRY motif; important for ligand-induced conformation changes motif; that stretch reads DRY. Residues 172–191 are Cytoplasmic-facing; sequence DRYVAIQNPIHHSRFNSRTK. Residues 192-215 form a helical membrane-spanning segment; it reads AFLKIIAVWTISVGISMPIPVFGL. The Extracellular segment spans residues 216 to 232; that stretch reads QDDSKVFKEGSCLLADD. A helical transmembrane segment spans residues 233–258; it reads NFVLIGSFVSFFIPLTIMVITYFLTI. The Cytoplasmic portion of the chain corresponds to 259 to 321; that stretch reads KSLQKEATLC…QSISNEQKAC (63 aa). At S280 the chain carries Phosphoserine. Residues 322–347 form a helical membrane-spanning segment; the sequence is KVLGIVFFLFVVMWCPFFITNIMAVI. Position 342 (N342) interacts with serotonin. C348 and C352 are disulfide-bonded. The Extracellular segment spans residues 348–355; the sequence is CKESCNED. The helical transmembrane segment at 356–381 threads the bilayer; it reads IIGALLNVFVWIGYLSSAVNPLVYTL. The short motif at 375-379 is the NPxxY motif; important for ligand-induced conformation changes and signaling element; the sequence is NPLVY. Topologically, residues 382-470 are cytoplasmic; that stretch reads FNKTYRSAFS…NTVNEKVSCV (89 aa). The short motif at 468 to 470 is the PDZ-binding element; it reads SCV.

The protein belongs to the G-protein coupled receptor 1 family. As to quaternary structure, interacts (via C-terminus) with MPDZ and PATJ. May interact (via C-terminus) with MPP3, PRDX6, DLG4, DLG1, CASK, APBA1 and MAGI2. Interacts with GRM2 and DRD2; this may affect signaling. As to expression, ubiquitous.

It is found in the cell membrane. It localises to the cell projection. The protein localises to the dendrite. Its subcellular location is the axon. The protein resides in the cytoplasmic vesicle. It is found in the membrane. It localises to the caveola. The protein localises to the presynapse. G-protein coupled receptor activity is regulated by lipids: oleamide increases HTR2A-mediated activity. Its function is as follows. G-protein coupled receptor for 5-hydroxytryptamine (serotonin). Also functions as a receptor for various drugs and psychoactive substances, including mescaline, psilocybin, 1-(2,5-dimethoxy-4-iodophenyl)-2-aminopropane (DOI) and lysergic acid diethylamide (LSD). Ligand binding causes a conformation change that triggers signaling via guanine nucleotide-binding proteins (G proteins) and modulates the activity of downstream effectors. HTR2A is coupled to G(q)/G(11) G alpha proteins and activates phospholipase C-beta, releasing diacylglycerol (DAG) and inositol 1,4,5-trisphosphate (IP3) second messengers that modulate the activity of phosphatidylinositol 3-kinase and promote the release of Ca(2+) ions from intracellular stores, respectively. Beta-arrestin family members inhibit signaling via G proteins and mediate activation of alternative signaling pathways. Affects neural activity, perception, cognition and mood. Plays a role in the regulation of behavior, including responses to anxiogenic situations and psychoactive substances. Plays a role in intestinal smooth muscle contraction, and may play a role in arterial vasoconstriction. This chain is 5-hydroxytryptamine receptor 2A (HTR2A), found in Canis lupus familiaris (Dog).